The chain runs to 20 residues: SNSLFEEVRPIVNGMDCKLG.

One can recognise a Gla domain in the interval 1–10 (SNSLFEEVRP). 4-carboxyglutamate occurs at positions 6 and 7. A Peptidase S1 domain is found at 11-20 (IVNGMDCKLG).

Belongs to the peptidase S1 family. Snake venom subfamily. As to quaternary structure, heterodimer of a light chain and a heavy chain; disulfide-linked. In terms of processing, gamma-carboxyglutamate residues are formed by vitamin K dependent carboxylation. These residues are essential for the binding of calcium. Expressed by the venom gland.

The protein resides in the secreted. The enzyme catalyses Selective cleavage of Arg-|-Thr and then Arg-|-Ile bonds in prothrombin to form thrombin.. In terms of biological role, snake prothrombin activator that attacks the hemostatic system of prey. This protein is functionally similar to blood coagulation factor Xa. This Notechis scutatus niger (Peninsula tiger snake) protein is Venom prothrombin activator notanarin-D.